A 1299-amino-acid polypeptide reads, in one-letter code: Nuclear factor related to kappa-B-binding protein (1299 aa).

The region spanning 39 to 156 (PEDLLEDPEI…LKQILASRSD (118 aa)) is the DEUBAD domain. Disordered stretches follow at residues 163-187 (RSGP…REWR) and 204-232 (GDTA…PAVP). Residues 216 to 232 (SSWLPSSPARSPSPAVP) show a composition bias toward low complexity. Phosphoserine is present on residues serine 228 and serine 298. Lysine 327 is covalently cross-linked (Glycyl lysine isopeptide (Lys-Gly) (interchain with G-Cter in SUMO2)). Residue serine 351 is modified to Phosphoserine. The tract at residues 370–495 (LGINEISSSF…FCKQENEDSS (126 aa)) is winged-helix like domain. Residue lysine 469 forms a Glycyl lysine isopeptide (Lys-Gly) (interchain with G-Cter in SUMO2) linkage. A Glycyl lysine isopeptide (Lys-Gly) (interchain with G-Cter in SUMO1); alternate cross-link involves residue lysine 488. A Glycyl lysine isopeptide (Lys-Gly) (interchain with G-Cter in SUMO2); alternate cross-link involves residue lysine 488. 3 disordered regions span residues 669–760 (AAKA…SSSG), 882–902 (LPAT…TSAP), and 1017–1043 (VHAA…TVVK). Composition is skewed to low complexity over residues 677-688 (QQKPKPPSKVKS), 695-715 (IKVL…DSSM), and 723-733 (VTPTTPALPAI). Residues 744-760 (NKSGPSTVSEPAKSSSG) show a composition bias toward polar residues. Composition is skewed to low complexity over residues 892–902 (PATSSPGTSAP) and 1019–1043 (AADS…TVVK). Serine 1022 carries the post-translational modification Phosphoserine. The residue at position 1237 (lysine 1237) is an N6-acetyllysine. Serine 1291 carries the phosphoserine modification.

This sequence belongs to the NFRKB family. Component of the chromatin remodeling INO80 complex; specifically part of a complex module associated with the N-terminus of INO80. Interacts with UCHL5; NFRKB competes with ADRM1 for interaction with UCHL5. Expressed in thymus, brain, testes, spleen and liver.

The protein localises to the nucleus. Binds to the DNA consensus sequence 5'-GGGGAATCTCC-3'. Functionally, putative regulatory component of the chromatin remodeling INO80 complex which is involved in transcriptional regulation, DNA replication and probably DNA repair. Modulates the deubiquitinase activity of UCHL5 in the INO80 complex. The chain is Nuclear factor related to kappa-B-binding protein (NFRKB) from Homo sapiens (Human).